Here is a 364-residue protein sequence, read N- to C-terminus: DNA replication and repair protein RecF (364 aa).

Glycine 30–threonine 37 lines the ATP pocket.

This sequence belongs to the RecF family.

It is found in the cytoplasm. In terms of biological role, the RecF protein is involved in DNA metabolism; it is required for DNA replication and normal SOS inducibility. RecF binds preferentially to single-stranded, linear DNA. It also seems to bind ATP. This chain is DNA replication and repair protein RecF, found in Clostridium botulinum (strain Okra / Type B1).